The primary structure comprises 145 residues: Nucleoside diphosphate kinase (145 aa).

ATP contacts are provided by K11, F59, R87, T93, R104, and N114. The active-site Pros-phosphohistidine intermediate is H117.

This sequence belongs to the NDK family. Homotetramer. Mg(2+) is required as a cofactor.

It is found in the cytoplasm. It carries out the reaction a 2'-deoxyribonucleoside 5'-diphosphate + ATP = a 2'-deoxyribonucleoside 5'-triphosphate + ADP. The catalysed reaction is a ribonucleoside 5'-diphosphate + ATP = a ribonucleoside 5'-triphosphate + ADP. Major role in the synthesis of nucleoside triphosphates other than ATP. The ATP gamma phosphate is transferred to the NDP beta phosphate via a ping-pong mechanism, using a phosphorylated active-site intermediate. This is Nucleoside diphosphate kinase from Myxococcus xanthus.